The following is a 354-amino-acid chain: Guanine nucleotide-binding protein G(q) subunit alpha (354 aa).

2 S-palmitoyl cysteine lipidation sites follow: Cys-3 and Cys-4. The G-alpha domain occupies 32–354; that stretch reads RELKLLLLGT…QLNLKEYNLV (323 aa). Residues 35–48 form a G1 motif region; the sequence is KLLLLGTGESGKST. GTP contacts are provided by residues 40 to 47, 174 to 180, 199 to 203, 269 to 272, and Ala-326; these read GTGESGKS, LRVRVPT, DVGGQ, and NKKD. Mg(2+) contacts are provided by Ser-47 and Thr-180. The tract at residues 172 to 180 is G2 motif; it reads DILRVRVPT. Residues 195–204 are G3 motif; that stretch reads FRMVDVGGQR. The tract at residues 265–272 is G4 motif; that stretch reads ILFLNKKD. Positions 324–329 are G5 motif; sequence TCATDT.

It belongs to the G-alpha family. G(q) subfamily. G proteins are composed of 3 units; alpha, beta and gamma. The alpha chain contains the guanine nucleotide binding site. A high concentration was found in the retinal light-sensitive outer segment.

Guanine nucleotide-binding proteins (G proteins) are involved as modulators or transducers in various transmembrane signaling systems. Functionally, the G(q) alpha subunit is involved in the light-dependent activation of phospholipase C. This chain is Guanine nucleotide-binding protein G(q) subunit alpha, found in Loligo forbesii (Veined squid).